We begin with the raw amino-acid sequence, 215 residues long: Probable GTP-binding protein EngB (215 aa).

An EngB-type G domain is found at G31–Q215. Residues G39–S46, G66–E70, D93–G96, T160–D163, and T194–A196 each bind GTP. Residues S46 and T68 each coordinate Mg(2+).

This sequence belongs to the TRAFAC class TrmE-Era-EngA-EngB-Septin-like GTPase superfamily. EngB GTPase family. It depends on Mg(2+) as a cofactor.

Functionally, necessary for normal cell division and for the maintenance of normal septation. This Bartonella bacilliformis (strain ATCC 35685 / KC583 / Herrer 020/F12,63) protein is Probable GTP-binding protein EngB.